The sequence spans 613 residues: Proline--tRNA ligase (613 aa).

Belongs to the class-II aminoacyl-tRNA synthetase family. ProS type 1 subfamily. Homodimer.

It is found in the cytoplasm. The catalysed reaction is tRNA(Pro) + L-proline + ATP = L-prolyl-tRNA(Pro) + AMP + diphosphate. Its function is as follows. Catalyzes the attachment of proline to tRNA(Pro) in a two-step reaction: proline is first activated by ATP to form Pro-AMP and then transferred to the acceptor end of tRNA(Pro). As ProRS can inadvertently accommodate and process non-cognate amino acids such as alanine and cysteine, to avoid such errors it has two additional distinct editing activities against alanine. One activity is designated as 'pretransfer' editing and involves the tRNA(Pro)-independent hydrolysis of activated Ala-AMP. The other activity is designated 'posttransfer' editing and involves deacylation of mischarged Ala-tRNA(Pro). The misacylated Cys-tRNA(Pro) is not edited by ProRS. This is Proline--tRNA ligase from Tropheryma whipplei (strain Twist) (Whipple's bacillus).